The following is a 363-amino-acid chain: Ribosome-binding ATPase YchF (363 aa).

In terms of domain architecture, OBG-type G spans 3–256; that stretch reads FKCGIVGLPN…LDDEEKVEFL (254 aa). 12–17 serves as a coordination point for ATP; that stretch reads NVGKST. Residues S16 and T36 each contribute to the Mg(2+) site. One can recognise a TGS domain in the interval 278 to 361; the sequence is NLQTYFTAGV…QDGDVMHFRF (84 aa).

Requires Mg(2+) as cofactor.

ATPase that binds to both the 70S ribosome and the 50S ribosomal subunit in a nucleotide-independent manner. Does not hydrolyze GTP. This is Ribosome-binding ATPase YchF from Haemophilus influenzae (strain ATCC 51907 / DSM 11121 / KW20 / Rd).